The sequence spans 416 residues: Na(+)/H(+) antiporter NhaA (416 aa).

Helical transmembrane passes span 39–59, 82–102, 119–139, 146–166, 175–195, 198–218, 234–254, 281–301, 315–335, 353–373, and 390–410; these read GIVL…PWAA, LHFW…GLEI, LPVL…LALV, GWAV…ALLG, VFLL…IALF, GGLQ…VLLL, AVLW…GVVL, PWVT…VALG, LLMA…VLLA, WGGL…AIFI, and GVLL…WWLQ.

The protein belongs to the NhaA Na(+)/H(+) (TC 2.A.33) antiporter family.

Its subcellular location is the cell inner membrane. The enzyme catalyses Na(+)(in) + 2 H(+)(out) = Na(+)(out) + 2 H(+)(in). Functionally, na(+)/H(+) antiporter that extrudes sodium in exchange for external protons. This is Na(+)/H(+) antiporter NhaA from Acidovorax sp. (strain JS42).